The sequence spans 137 residues: Small ribosomal subunit protein uS11 (137 aa).

2 disordered regions span residues 1-31 (MPPKSRGTGPKKTQKARRRDKKNVPHGAAHI) and 117-137 (TISDVTPQPHNGCRPPKRRRV). Residues 12–21 (KTQKARRRDK) are compositionally biased toward basic residues.

It belongs to the universal ribosomal protein uS11 family. In terms of assembly, part of the 30S ribosomal subunit. Interacts with proteins S7 and S18. Binds to IF-3.

Its function is as follows. Located on the platform of the 30S subunit, it bridges several disparate RNA helices of the 16S rRNA. Forms part of the Shine-Dalgarno cleft in the 70S ribosome. The polypeptide is Small ribosomal subunit protein uS11 (Rhodococcus jostii (strain RHA1)).